A 327-amino-acid chain; its full sequence is L-lactate dehydrogenase (327 aa).

Residues V18, D39, K44, Y69, and 83-84 each bind NAD(+); that span reads GA. Substrate is bound by residues Q86, R92, and 124 to 127; that span reads NPVD. NAD(+)-binding positions include 122–124 and S147; that span reads AAN. 152-155 lines the substrate pocket; it reads DSAR. Beta-D-fructose 1,6-bisphosphate-binding residues include R157 and H172. H179 serves as the catalytic Proton acceptor. Position 224 is a phosphotyrosine (Y224). A substrate-binding site is contributed by T233.

This sequence belongs to the LDH/MDH superfamily. LDH family. In terms of assembly, homotetramer.

The protein resides in the cytoplasm. The catalysed reaction is (S)-lactate + NAD(+) = pyruvate + NADH + H(+). The protein operates within fermentation; pyruvate fermentation to lactate; (S)-lactate from pyruvate: step 1/1. With respect to regulation, allosterically activated by fructose 1,6-bisphosphate (FBP). Functionally, catalyzes the conversion of lactate to pyruvate. The polypeptide is L-lactate dehydrogenase (Streptococcus equi subsp. zooepidemicus (strain H70)).